The chain runs to 117 residues: NADH-ubiquinone oxidoreductase chain 3 (117 aa).

3 helical membrane-spanning segments follow: residues 1 to 21 (MLSL…LLLV), 56 to 76 (FFLV…ILPY), and 86 to 106 (TFYN…GLMY).

It belongs to the complex I subunit 3 family.

It localises to the mitochondrion membrane. It carries out the reaction a ubiquinone + NADH + 5 H(+)(in) = a ubiquinol + NAD(+) + 4 H(+)(out). Functionally, core subunit of the mitochondrial membrane respiratory chain NADH dehydrogenase (Complex I) that is believed to belong to the minimal assembly required for catalysis. Complex I functions in the transfer of electrons from NADH to the respiratory chain. The immediate electron acceptor for the enzyme is believed to be ubiquinone. The chain is NADH-ubiquinone oxidoreductase chain 3 (ND3) from Branchiostoma lanceolatum (Common lancelet).